The sequence spans 372 residues: Pepsin A (372 aa).

Positions 1-42 (MSVVKIPLVKKKSLRQNLIENGKLKEFMRTHKYNLGSKYIRE) are cleaved as a propeptide — activation peptide. A Peptidase A1 domain is found at 60 to 369 (YFGTIGIGTP…DRGNNQIGLA (310 aa)). Asp78 is an active-site residue. The cysteines at positions 91 and 96 are disulfide-linked. The residue at position 114 (Ser114) is a Phosphoserine. A disulfide bond links Cys252 and Cys256. Asp261 is a catalytic residue. Residues Cys295 and Cys328 are joined by a disulfide bond.

This sequence belongs to the peptidase A1 family.

Its subcellular location is the secreted. The enzyme catalyses Preferential cleavage: hydrophobic, preferably aromatic, residues in P1 and P1' positions. Cleaves 1-Phe-|-Val-2, 4-Gln-|-His-5, 13-Glu-|-Ala-14, 14-Ala-|-Leu-15, 15-Leu-|-Tyr-16, 16-Tyr-|-Leu-17, 23-Gly-|-Phe-24, 24-Phe-|-Phe-25 and 25-Phe-|-Tyr-26 bonds in the B chain of insulin.. Functionally, shows particularly broad specificity; although bonds involving phenylalanine and leucine are preferred, many others are also cleaved to some extent. The sequence is that of Pepsin A (PGA) from Bos taurus (Bovine).